The following is a 582-amino-acid chain: NudC domain-containing protein 1 (582 aa).

Ser7 carries the phosphoserine modification. Residues 272–360 (KVEPLYYWQQ…NEGLMWPELV (89 aa)) form the CS domain. Residue Ser387 is modified to Phosphoserine.

It is found in the cytoplasm. Its subcellular location is the nucleus. The chain is NudC domain-containing protein 1 from Mus musculus (Mouse).